We begin with the raw amino-acid sequence, 275 residues long: NH(3)-dependent NAD(+) synthetase (275 aa).

46–53 (GISGGQDS) is an ATP binding site. Residue Asp52 coordinates Mg(2+). Arg140 contributes to the deamido-NAD(+) binding site. An ATP-binding site is contributed by Thr160. Position 165 (Glu165) interacts with Mg(2+). Deamido-NAD(+)-binding residues include Lys173 and Asp180. The ATP site is built by Lys189 and Thr211. 260–261 (HK) lines the deamido-NAD(+) pocket.

It belongs to the NAD synthetase family. As to quaternary structure, homodimer.

It catalyses the reaction deamido-NAD(+) + NH4(+) + ATP = AMP + diphosphate + NAD(+) + H(+). It functions in the pathway cofactor biosynthesis; NAD(+) biosynthesis; NAD(+) from deamido-NAD(+) (ammonia route): step 1/1. Its function is as follows. Catalyzes the ATP-dependent amidation of deamido-NAD to form NAD. Uses ammonia as a nitrogen source. In Salmonella arizonae (strain ATCC BAA-731 / CDC346-86 / RSK2980), this protein is NH(3)-dependent NAD(+) synthetase.